A 91-amino-acid polypeptide reads, in one-letter code: Large ribosomal subunit protein bL27 (91 aa).

Residues 1–26 (MAHKKGVGSSRNGRDSNPKMRGVKRF) are disordered.

This sequence belongs to the bacterial ribosomal protein bL27 family.

The polypeptide is Large ribosomal subunit protein bL27 (Chloroflexus aurantiacus (strain ATCC 29366 / DSM 635 / J-10-fl)).